The primary structure comprises 377 residues: Mitochondrial pyrimidine nucleotide transporter RIM2 (377 aa).

Solcar repeat units lie at residues 50–163 (VKPW…TKDM), 173–262 (ETPM…MKRL), and 286–375 (KEWC…VIRL). A run of 6 helical transmembrane segments spans residues 53 to 73 (WVHF…TCPF), 131 to 151 (GFRS…PARS), 179 to 199 (LMAA…IWLI), 238 to 258 (GLSA…LYEQ), 286 to 306 (KEWC…SIAT), and 347 to 368 (MYSG…MFGT).

The protein belongs to the mitochondrial carrier (TC 2.A.29) family.

The protein localises to the mitochondrion inner membrane. The enzyme catalyses 5-methyl-UTP(out) + UTP(in) = 5-methyl-UTP(in) + UTP(out). In terms of biological role, mitochondrial transporter that imports/exports pyrimidine nucleotides into and from mitochondria. Selectively transports uridine, thymidine, and cytosine (deoxy)nucleoside di- and triphosphates by an antiport mechanism. Also transports, with lower efficiency, uridine, thymidine, and cytosine (deoxy)nucleoside monophosphates as well as guanosine (deoxy)nucleoside di- and triphosphate. May import (deoxy)nucleoside triphosphates in exchange for intramitochondrial (deoxy)nucleoside monophosphates, thus providing precursors necessary for de novo synthesis of mitochondrial DNA and RNA while exporting products of their catabolism. Mediates the transport of iron and other divalent metal ions like copper and zinc across the mitochondrial inner membrane in a pyrimidine nucleotide-dependent fashion. Catalyzes the co-import of pyrimidine nucleotides and divalent metal ions including ferrous iron. Participates in mitochondrial genome maintenance, regulation of mitochondrial membrane potential and mitochondrial respiration. This chain is Mitochondrial pyrimidine nucleotide transporter RIM2 (RIM2), found in Saccharomyces cerevisiae (strain ATCC 204508 / S288c) (Baker's yeast).